A 70-amino-acid chain; its full sequence is Small ribosomal subunit protein bS21 (70 aa).

It belongs to the bacterial ribosomal protein bS21 family.

The polypeptide is Small ribosomal subunit protein bS21 (Cupriavidus pinatubonensis (strain JMP 134 / LMG 1197) (Cupriavidus necator (strain JMP 134))).